The sequence spans 353 residues: UPF0283 membrane protein YcjF (353 aa).

The segment covering 1–19 has biased composition (basic and acidic residues); the sequence is MSEPLKPRIDFAEPLKEEP. The tract at residues 1–35 is disordered; the sequence is MSEPLKPRIDFAEPLKEEPTSAFKAQQTFSEAESR. 3 helical membrane passes run 70–90, 100–120, and 213–233; these read MVMGGLALFGASVVGQGVQWT, VALGGCAAGALIIGAGVGSVV, and ESTLMIAVSPLALVDMAFIAW.

The protein belongs to the UPF0283 family.

It is found in the cell inner membrane. This is UPF0283 membrane protein YcjF from Salmonella dublin (strain CT_02021853).